The following is a 345-amino-acid chain: Phosphoribosylformylglycinamidine cyclo-ligase (345 aa).

This sequence belongs to the AIR synthase family.

It is found in the cytoplasm. The enzyme catalyses 2-formamido-N(1)-(5-O-phospho-beta-D-ribosyl)acetamidine + ATP = 5-amino-1-(5-phospho-beta-D-ribosyl)imidazole + ADP + phosphate + H(+). The protein operates within purine metabolism; IMP biosynthesis via de novo pathway; 5-amino-1-(5-phospho-D-ribosyl)imidazole from N(2)-formyl-N(1)-(5-phospho-D-ribosyl)glycinamide: step 2/2. The sequence is that of Phosphoribosylformylglycinamidine cyclo-ligase from Synechococcus sp. (strain CC9605).